We begin with the raw amino-acid sequence, 393 residues long: Demethylspheroidene O-methyltransferase (393 aa).

The tract at residues 1–36 (MPKDDHTGATADRTAQPTGTGKQPLVPGQPGAAPVQ) is disordered. The segment covering 26-36 (VPGQPGAAPVQ) has biased composition (low complexity). S-adenosyl-L-methionine is bound by residues Asp-259 and Arg-297.

This sequence belongs to the class I-like SAM-binding methyltransferase superfamily. Cation-independent O-methyltransferase family.

The enzyme catalyses demethylspheroidene + S-adenosyl-L-methionine = spheroidene + S-adenosyl-L-homocysteine + H(+). It participates in carotenoid biosynthesis; spheroidene biosynthesis. In terms of biological role, methyltransferase that mediates the O-methylation of 1-hydroxy carotenoids. Converts hydroxyneurosporene to methoxyneurosporene or demethylspheroidene to spheroidene. Also able to produce spirilloxanthin. The polypeptide is Demethylspheroidene O-methyltransferase (crtF) (Rhodobacter capsulatus (strain ATCC BAA-309 / NBRC 16581 / SB1003)).